The chain runs to 180 residues: Large ribosomal subunit protein uL6 (180 aa).

The protein belongs to the universal ribosomal protein uL6 family. In terms of assembly, part of the 50S ribosomal subunit.

This protein binds to the 23S rRNA, and is important in its secondary structure. It is located near the subunit interface in the base of the L7/L12 stalk, and near the tRNA binding site of the peptidyltransferase center. This is Large ribosomal subunit protein uL6 from Anaeromyxobacter sp. (strain K).